The primary structure comprises 122 residues: Protein GL2-INTERACTING REPRESSOR 1 (122 aa).

Residues 1–10 (MSRRSPKLEL) are compositionally biased toward basic and acidic residues. The interval 1 to 62 (MSRRSPKLEL…PSVRYSTSPE (62 aa)) is disordered. The EAR signature appears at 7–12 (KLELKL). A compositionally biased stretch (low complexity) spans 27–46 (SPSRSATTSPTSPPSSCVSS). The span at 47 to 62 (EMNQDEPSVRYSTSPE) shows a compositional bias: polar residues.

As to quaternary structure, interacts with GL2. Interacts with TPL. In terms of tissue distribution, expressed in root and shoot meristems.

The protein resides in the nucleus. Acts as a negative regulator of root hair development redundantly with GIR2. GIR1 and GIR2 may function as adapter proteins that associate with GL2 and participate in the control of root hair formation. GIR1 and GIR2 may function as adapter proteins that associate with TPL and participate in the repression of root gene expression. This Arabidopsis thaliana (Mouse-ear cress) protein is Protein GL2-INTERACTING REPRESSOR 1.